A 249-amino-acid polypeptide reads, in one-letter code: NADH-quinone oxidoreductase subunit C (249 aa).

The protein belongs to the complex I 30 kDa subunit family. As to quaternary structure, NDH-1 is composed of 14 different subunits. Subunits NuoB, C, D, E, F, and G constitute the peripheral sector of the complex.

The protein resides in the cell inner membrane. The catalysed reaction is a quinone + NADH + 5 H(+)(in) = a quinol + NAD(+) + 4 H(+)(out). Functionally, NDH-1 shuttles electrons from NADH, via FMN and iron-sulfur (Fe-S) centers, to quinones in the respiratory chain. The immediate electron acceptor for the enzyme in this species is believed to be ubiquinone. Couples the redox reaction to proton translocation (for every two electrons transferred, four hydrogen ions are translocated across the cytoplasmic membrane), and thus conserves the redox energy in a proton gradient. The chain is NADH-quinone oxidoreductase subunit C from Xylella fastidiosa (strain M12).